A 245-amino-acid polypeptide reads, in one-letter code: Probable phosphatase Teth514_1060 (245 aa).

Positions 8, 10, 16, 41, 74, 102, 133, 194, and 196 each coordinate Zn(2+).

This sequence belongs to the PHP family. It depends on Zn(2+) as a cofactor.

In Thermoanaerobacter sp. (strain X514), this protein is Probable phosphatase Teth514_1060.